A 538-amino-acid polypeptide reads, in one-letter code: Cytochrome P450 monooxygenase flvC (538 aa).

Residues Thr17–Leu37 traverse the membrane as a helical segment. Cys478 provides a ligand contact to heme.

Belongs to the cytochrome P450 family. It depends on heme as a cofactor.

The protein localises to the membrane. The catalysed reaction is pre-flavunoidine + reduced [NADPH--hemoprotein reductase] + O2 = 10-hydroxy-pre-flavunoidine + oxidized [NADPH--hemoprotein reductase] + H2O + H(+). It participates in secondary metabolite biosynthesis; terpenoid biosynthesis. Cytochrome P450 monooxygenase; part of the gene cluster that mediates the biosynthesis of flavunoidine, an alkaloidal terpenoid with a tetracyclic cage-like core connected to dimethylcadaverine via a C-N bond and acylated with 5,5-dimethyl-L-pipecolate. The tetracyclic core is synthesized by the terpene cyclase flvE and the cytochrome P450 monooxygenase flvD. The terpene cyclase flvE catalyzes the cyclization of farnesyl pyrophosphate (FPP) to form (1R,4R,5S)-(+)-acoradiene and the cytochrome P450 monooxygenase flvD is then responsible for oxidative conversion of (1R,4R,5S)-(+)-acoradiene into the tetracyclic cage present in the final product flavunoidine. In parallel, the N-methyltransferase flvH dimethylates L-lysine to give N,N-dimethyl-L-Lysin which is decarboxylated by flvG to afford dimethylcadaverine. The terpene cyclase-like protein flvF is the enzyme that attaches the dimethylcadaverine precusor at the C-7 of the tetracyclic cage to yield pre-flavunoidine. The cytochrome monooxygenase flvC hydroxylates the C-10 position of pre-flavunoidine whereas the NRPS flvI acylates the terpenoid core at the hydroxylated C-10 with dimethylpipecolate to yield final flavunoidine. The bifunctional enzyme flvA and the dehydrogenase flvB are responsible for the synthesis of the dimethylpipecolate precursor. The PLP-dependent lyase domain of flvA might use L-O-acetyl-homoserine and alpha-keto-isovalerate to form an intermediary ketone that can cyclize intramolecularly to yield an imine. The imine can be reduced by flvB to yield the 6-carboxylated pipecolate. The C-terminal alpha-KG-dependent oxygenase domain of flvA is then proposed to catalyze the decarboxylation to yield dimethylpipecolate. In Aspergillus flavus (strain ATCC 200026 / FGSC A1120 / IAM 13836 / NRRL 3357 / JCM 12722 / SRRC 167), this protein is Cytochrome P450 monooxygenase flvC.